The chain runs to 177 residues: Olfactory protein (177 aa).

The N-terminal stretch at 1-17 is a signal peptide; sequence MIRIIAIVVLFFLQCQA. Cys81 and Cys174 are disulfide-bonded.

This sequence belongs to the calycin superfamily. Lipocalin family. As to expression, synthesized in Bowman glands, which secrete the mucus that bathes the cilia of the olfactory neuroepithelium.

Its subcellular location is the secreted. The polypeptide is Olfactory protein (Lithobates pipiens (Northern leopard frog)).